Consider the following 344-residue polypeptide: Nuclear distribution protein nudE-like 1-A (344 aa).

A coiled-coil region spans residues 26–187 (YKKSYKEAQE…RQELAVRDTR (162 aa)). Residues 181–190 (LAVRDTRSEV) show a composition bias toward basic and acidic residues. Disordered regions lie at residues 181–209 (LAVRDTRSEVTRMSAPSSPTPDNDKTDSA) and 322–344 (PGDGTHITAPPRSNSPSGLVLSV).

This sequence belongs to the nudE family. Post-translationally, phosphorylated in mitosis.

It localises to the cytoplasm. It is found in the cytoskeleton. The protein resides in the microtubule organizing center. The protein localises to the centrosome. Its subcellular location is the spindle. In terms of biological role, required for organization of the cellular microtubule array and microtubule anchoring at the centrosome. Positively regulates the activity of the minus-end directed microtubule motor protein dynein. May enhance dynein-mediated microtubule sliding by targeting dynein to the microtubule plus end. The chain is Nuclear distribution protein nudE-like 1-A (ndel1a) from Danio rerio (Zebrafish).